A 403-amino-acid chain; its full sequence is Acetyl-CoA acetyltransferase IA (403 aa).

C91 functions as the Acyl-thioester intermediate in the catalytic mechanism. Residues H353 and C383 each act as proton acceptor in the active site. A Microbody targeting signal motif is present at residues 401-403; it reads AKL.

Belongs to the thiolase-like superfamily. Thiolase family. Multimeric.

It localises to the peroxisome. The enzyme catalyses 2 acetyl-CoA = acetoacetyl-CoA + CoA. Its pathway is metabolic intermediate biosynthesis; (R)-mevalonate biosynthesis; (R)-mevalonate from acetyl-CoA: step 1/3. The chain is Acetyl-CoA acetyltransferase IA (PACTA) from Candida tropicalis (Yeast).